The sequence spans 298 residues: N-acetylmuramic acid 6-phosphate etherase (298 aa).

The SIS domain maps to 57–220; the sequence is IAAAFGKGGR…STGAMIRTGK (164 aa). Glu85 functions as the Proton donor in the catalytic mechanism. The active site involves Glu116.

This sequence belongs to the GCKR-like family. MurNAc-6-P etherase subfamily. Homodimer.

The enzyme catalyses N-acetyl-D-muramate 6-phosphate + H2O = N-acetyl-D-glucosamine 6-phosphate + (R)-lactate. It functions in the pathway amino-sugar metabolism; 1,6-anhydro-N-acetylmuramate degradation. Its pathway is amino-sugar metabolism; N-acetylmuramate degradation. It participates in cell wall biogenesis; peptidoglycan recycling. Specifically catalyzes the cleavage of the D-lactyl ether substituent of MurNAc 6-phosphate, producing GlcNAc 6-phosphate and D-lactate. Together with AnmK, is also required for the utilization of anhydro-N-acetylmuramic acid (anhMurNAc) either imported from the medium or derived from its own cell wall murein, and thus plays a role in cell wall recycling. The sequence is that of N-acetylmuramic acid 6-phosphate etherase from Aeromonas hydrophila subsp. hydrophila (strain ATCC 7966 / DSM 30187 / BCRC 13018 / CCUG 14551 / JCM 1027 / KCTC 2358 / NCIMB 9240 / NCTC 8049).